The primary structure comprises 299 residues: Serine/threonine-protein kinase 1 (299 aa).

One can recognise a Protein kinase domain in the interval 39-277 (IATKPMFEGG…FKGLVSHPWF (239 aa)). ATP contacts are provided by residues 45–53 (FEGGRRNNV) and lysine 66. The active-site Proton acceptor is aspartate 153.

This sequence belongs to the protein kinase superfamily. Ser/Thr protein kinase family.

The protein localises to the virion. The protein resides in the host cytoplasm. It catalyses the reaction L-seryl-[protein] + ATP = O-phospho-L-seryl-[protein] + ADP + H(+). It carries out the reaction L-threonyl-[protein] + ATP = O-phospho-L-threonyl-[protein] + ADP + H(+). Functionally, essential for viral replication. It may mediate the virus progression through DNA replication. In African swine fever virus (isolate Pig/Kenya/KEN-50/1950) (ASFV), this protein is Serine/threonine-protein kinase 1.